We begin with the raw amino-acid sequence, 422 residues long: NADH-quinone oxidoreductase subunit D 1 (422 aa).

The protein belongs to the complex I 49 kDa subunit family. As to quaternary structure, NDH-1 is composed of 14 different subunits. Subunits NuoB, C, D, E, F, and G constitute the peripheral sector of the complex.

It is found in the cell membrane. The catalysed reaction is a quinone + NADH + 5 H(+)(in) = a quinol + NAD(+) + 4 H(+)(out). NDH-1 shuttles electrons from NADH, via FMN and iron-sulfur (Fe-S) centers, to quinones in the respiratory chain. The immediate electron acceptor for the enzyme in this species is believed to be ubiquinone. Couples the redox reaction to proton translocation (for every two electrons transferred, four hydrogen ions are translocated across the cytoplasmic membrane), and thus conserves the redox energy in a proton gradient. This chain is NADH-quinone oxidoreductase subunit D 1, found in Herpetosiphon aurantiacus (strain ATCC 23779 / DSM 785 / 114-95).